The primary structure comprises 545 residues: CTP synthase (545 aa).

The amidoligase domain stretch occupies residues 1-266 (MTTRYIFVTG…DDLVVKRFGL (266 aa)). Residue S14 coordinates CTP. Residue S14 coordinates UTP. ATP contacts are provided by residues 15–20 (SLGKGI) and D72. Residues D72 and E140 each coordinate Mg(2+). CTP is bound by residues 147–149 (DIE), 187–192 (KTKPTQ), and K223. Residues 187–192 (KTKPTQ) and K223 contribute to the UTP site. 239 to 241 (KDV) contributes to the ATP binding site. In terms of domain architecture, Glutamine amidotransferase type-1 spans 291 to 542 (VIGMVGKYIE…IAAASAHQKR (252 aa)). L-glutamine is bound at residue G352. C379 serves as the catalytic Nucleophile; for glutamine hydrolysis. Residues 380 to 383 (LGMQ), E403, and R470 each bind L-glutamine. Catalysis depends on residues H515 and E517.

The protein belongs to the CTP synthase family. In terms of assembly, homotetramer.

It catalyses the reaction UTP + L-glutamine + ATP + H2O = CTP + L-glutamate + ADP + phosphate + 2 H(+). It carries out the reaction L-glutamine + H2O = L-glutamate + NH4(+). The enzyme catalyses UTP + NH4(+) + ATP = CTP + ADP + phosphate + 2 H(+). The protein operates within pyrimidine metabolism; CTP biosynthesis via de novo pathway; CTP from UDP: step 2/2. With respect to regulation, allosterically activated by GTP, when glutamine is the substrate; GTP has no effect on the reaction when ammonia is the substrate. The allosteric effector GTP functions by stabilizing the protein conformation that binds the tetrahedral intermediate(s) formed during glutamine hydrolysis. Inhibited by the product CTP, via allosteric rather than competitive inhibition. Functionally, catalyzes the ATP-dependent amination of UTP to CTP with either L-glutamine or ammonia as the source of nitrogen. Regulates intracellular CTP levels through interactions with the four ribonucleotide triphosphates. This chain is CTP synthase, found in Shewanella baltica (strain OS223).